We begin with the raw amino-acid sequence, 815 residues long: Cell division control protein 53 (815 aa).

Residues 9 to 280 (DDLEATWNFI…WDDHTKKPLS (272 aa)) are required for interaction with SKP1/CBF3D and F-box protein. Positions 448-748 (KKATKPEVAS…IEKELNTERQ (301 aa)) are required for interaction with CDC34/UBC3. The region spanning 746-807 (ERQIFLEACI…QKGYLQRGDD (62 aa)) is the Cullin neddylation domain. K760 participates in a covalent cross-link: Glycyl lysine isopeptide (Lys-Gly) (interchain with G-Cter in NEDD8).

It belongs to the cullin family. As to quaternary structure, component of multiple SCF (SKP1-CUL1-F-box) E3 ubiquitin-protein ligase complexes formed of CUL1, SKP1/HRT1, RBX1 and a variable F-box domain-containing protein as substrate-specific adapter. Component of the SCF(CDC4) complex containing CDC4. Component of the SCF(MET30) complex containing MET30. Component of the SCF(GRR1) complex containing GRR1. Component of the probable SCF(DIA2) complex containing DIA2. Component of the probable SCF(YDR131C) complex containing YDR131C. Component of the probable SCF(YDR306C) complex containing YDR306C. Component of the probable SCF(YLR224W) complex containing YLR224W. Component of the probable SCF(YJL149W) complex containing YJL149W. Component of the probable SCF(YNL311C) complex containing YNL311C. Component of the probable SCF(MDM30) complex containing MDM30. Component of the probable SCF(UFO1) complex containing UFO1. Component of the probable SCF(HRT3) complex containing HRT3. Component of the probable SCF(YBR280C) complex containing YBR280C. Component of the probable SCF(YBR352W) complex containing YBR352W. Interacts with DCN1, YBR280C, YLR224W and YLR352W. The unneddylated form interacts with LAG2/CAND1 and the interaction mediates the exchange of the F-box substrate-specific subunit. In terms of processing, neddylated; enhancing the ubiquitin-ligase activity.

It is found in the cytoplasm. It localises to the nucleus. In terms of biological role, core component of multiple cullin-RING-based SCF (SKP1-CUL1-F-box) E3 ubiquitin-protein ligase complexes which mediate the ubiquitination and subsequent proteasomal degradation of target proteins. As a scaffold protein may contribute to catalysis through positioning of the substrate and the ubiquitin-conjugating enzyme. The SCF complex associates with CDC34 as the E2 ubiquitin-conjugating enzyme. The functional specificity of the SCF complex depends on the type of F-box protein. SCF(CDC4) controls the G1-to-S phase transition; it directs ubiquitination of the phosphorylated CDK inhibitor SIC1 and of CDC6. SCF(CDC4) directs ubiquitination of GCN4. SCF(GRR1) directs ubiquitination of phosphorylated CLN1, CLN2 and GIC2. SCF(MET30) directs ubiquitination of MET4. SCF(DIA2) is specifically involved in the pheromone induced degradation of phosphorylated TEC1. SCF(MDM30) seems to direct ubiquitination of FZ01. Involved in the regulation of methionine biosynthesis genes. This chain is Cell division control protein 53 (CDC53), found in Saccharomyces cerevisiae (strain ATCC 204508 / S288c) (Baker's yeast).